Here is a 1149-residue protein sequence, read N- to C-terminus: ATP-dependent helicase/deoxyribonuclease subunit B (1149 aa).

8–15 is an ATP binding site; it reads GRAGTGKT. [4Fe-4S] cluster-binding residues include Cys784, Cys1102, Cys1105, and Cys1111.

This sequence belongs to the helicase family. AddB/RexB type 1 subfamily. Heterodimer of AddA and AddB. Requires Mg(2+) as cofactor. The cofactor is [4Fe-4S] cluster.

In terms of biological role, the heterodimer acts as both an ATP-dependent DNA helicase and an ATP-dependent, dual-direction single-stranded exonuclease. Recognizes the chi site generating a DNA molecule suitable for the initiation of homologous recombination. The AddB subunit has 5' -&gt; 3' nuclease activity but not helicase activity. The polypeptide is ATP-dependent helicase/deoxyribonuclease subunit B (Thermoanaerobacter pseudethanolicus (strain ATCC 33223 / 39E) (Clostridium thermohydrosulfuricum)).